We begin with the raw amino-acid sequence, 143 residues long: Transcriptional regulator SlyA (143 aa).

The 134-residue stretch at 2-135 folds into the HTH marR-type domain; the sequence is ESTLGSDLAR…LSGLIDKLEK (134 aa). Positions 49 to 72 form a DNA-binding region, H-T-H motif; it reads QIQLAKAIGIEQPSLVRTLDQLEE.

The protein belongs to the SlyA family. Homodimer.

Transcription regulator that can specifically activate or repress expression of target genes. The chain is Transcriptional regulator SlyA from Yersinia pestis (strain Pestoides F).